The chain runs to 91 residues: Small ribosomal subunit protein uS19 (91 aa).

It belongs to the universal ribosomal protein uS19 family.

Protein S19 forms a complex with S13 that binds strongly to the 16S ribosomal RNA. The protein is Small ribosomal subunit protein uS19 of Acinetobacter baumannii (strain AB307-0294).